A 316-amino-acid chain; its full sequence is ATP synthase gamma chain (316 aa).

It belongs to the ATPase gamma chain family. F-type ATPases have 2 components, CF(1) - the catalytic core - and CF(0) - the membrane proton channel. CF(1) has five subunits: alpha(3), beta(3), gamma(1), delta(1), epsilon(1). CF(0) has three main subunits: a, b and c.

The protein resides in the cellular thylakoid membrane. Functionally, produces ATP from ADP in the presence of a proton gradient across the membrane. The gamma chain is believed to be important in regulating ATPase activity and the flow of protons through the CF(0) complex. The polypeptide is ATP synthase gamma chain (Parasynechococcus marenigrum (strain WH8102)).